Here is a 330-residue protein sequence, read N- to C-terminus: MSLTELDDGLVRRMAMGAVFSDFGGKIHSVGFHRTDDLLVTSSEDDSLRLFDIANAKQLKITYHKKHGTDRVCFTHHPSSLICSSRYNLESTGESLRYLSMYDNRILRYFKGHKDRVVSLCMSPINDSFMSGSLDRSVRLWDLRVNACQGILHLRGRPAVAYDQQGLVFAIAMEGGAVKLFDSRCYDKGPFDTFLVGGDTAEVNDIKFSNDGKSMLLTTTNNNIYVLDAYRGEKKCGFSLEPSQGTPIEATFTPDGKYVLSGSGDGTLHAWNIENPSEVARWENNIGVVSCLKWAPRRAMFVAASTVLTFWIPNDGESPAPADPPTDQQQ.

WD repeat units follow at residues 22 to 61 (DFGGKIHSVGFHRTDDLLVTSSEDDSLRLFDIANAKQLKI), 112 to 151 (GHKDRVVSLCMSPINDSFMSGSLDRSVRLWDLRVNACQGI), 153 to 191 (HLRGRPAVAYDQQGLVFAIAMEGGAVKLFDSRCYDKGPF), 198 to 237 (GDTAEVNDIKFSNDGKSMLLTTTNNNIYVLDAYRGEKKCG), 242 to 281 (PSQGTPIEATFTPDGKYVLSGSGDGTLHAWNIENPSEVAR), and 284 to 323 (NNIGVVSCLKWAPRRAMFVAASTVLTFWIPNDGESPAPAD).

The protein belongs to the WD repeat SWD2 family. As to expression, expressed in the shoot apical meristem (SAM), embryos, seedlings, cotyledons, leaves primordia, young leaves and roots.

The protein resides in the nucleus. Its function is as follows. Component of a chromatin regulatory complex involved in regulating chromatin structure in the nucleus. Promotes flowering under long days (LD) via the regulation of bolting. This chain is Protein ANTHESIS POMOTING FACTOR 1, found in Arabidopsis thaliana (Mouse-ear cress).